We begin with the raw amino-acid sequence, 280 residues long: Large ribosomal subunit protein uL2 (280 aa).

Disordered regions lie at residues 1–58 (MAIR…GGGH) and 226–280 (MNPV…KHGR). Composition is skewed to basic residues over residues 37–58 (LHGH…GGGH) and 268–280 (IVRR…KHGR).

The protein belongs to the universal ribosomal protein uL2 family. In terms of assembly, part of the 50S ribosomal subunit. Forms a bridge to the 30S subunit in the 70S ribosome.

Functionally, one of the primary rRNA binding proteins. Required for association of the 30S and 50S subunits to form the 70S ribosome, for tRNA binding and peptide bond formation. It has been suggested to have peptidyltransferase activity; this is somewhat controversial. Makes several contacts with the 16S rRNA in the 70S ribosome. This Mycolicibacterium paratuberculosis (strain ATCC BAA-968 / K-10) (Mycobacterium paratuberculosis) protein is Large ribosomal subunit protein uL2.